The primary structure comprises 312 residues: Carbonic anhydrase 4 (312 aa).

The N-terminal stretch at 1 to 18 (MRMLLALLALSAARPSAS) is a signal peptide. An Alpha-carbonic anhydrase domain is found at 21–285 (SHWCYEVQAE…LGQRTVIKSG (265 aa)). 2 cysteine pairs are disulfide-bonded: cysteine 24–cysteine 36 and cysteine 46–cysteine 229. The Proton donor/acceptor role is filled by histidine 88. Residues histidine 115, histidine 117, and histidine 140 each coordinate Zn(2+). 225–226 (TT) contacts substrate. Serine 284 is lipidated: GPI-anchor amidated serine. Residues 285–312 (GAPGRPLPWALPALLGPMLACLLAGFLR) constitute a propeptide, removed in mature form.

Belongs to the alpha-carbonic anhydrase family. Interacts with SLC4A4. Zn(2+) is required as a cofactor. In terms of tissue distribution, expressed in the endothelium of the choriocapillaris in eyes (at protein level). Not expressed in the retinal epithelium at detectable levels.

The protein localises to the cell membrane. The enzyme catalyses hydrogencarbonate + H(+) = CO2 + H2O. With respect to regulation, activated by histamine, L-adrenaline, D-phenylalanine, L- and D-histidine. Inhibited by coumarins, saccharin, sulfonamide derivatives such as acetazolamide and Foscarnet (phosphonoformate trisodium salt). Functionally, catalyzes the reversible hydration of carbon dioxide into bicarbonate and protons and thus is essential to maintaining intracellular and extracellular pH. May stimulate the sodium/bicarbonate transporter activity of SLC4A4 that acts in pH homeostasis. It is essential for acid overload removal from the retina and retina epithelium, and acid release in the choriocapillaris in the choroid. This is Carbonic anhydrase 4 from Homo sapiens (Human).